The following is a 1116-amino-acid chain: Eukaryotic translation initiation factor 2-alpha kinase 3 (1116 aa).

The first 29 residues, 1-29 (MERAISPGLLVRALLLLLLLLGLAARTVA), serve as a signal peptide directing secretion. Residues 30–514 (AGRARGLPAP…HYNKNIRKKD (485 aa)) are Lumenal-facing. The disordered stretch occupies residues 77–101 (ALPAAAGEQEPRGPEPDDETELRPR). The N-linked (GlcNAc...) asparagine glycan is linked to asparagine 258. A helical membrane pass occupies residues 515-535 (PVLLLHWWKEIVATILFCIIA). Topologically, residues 536–1116 (TTFIVRRLFH…NNSHSPLPSN (581 aa)) are cytoplasmic. The segment at 550-571 (RQRKESETQCQTENKYDSVSGE) is disordered. A Protein kinase domain is found at 593-1077 (FEPIQCLGRG…AINIIENAVF (485 aa)). 599–607 (LGRGGFGVV) provides a ligand contact to ATP. Residue tyrosine 619 is modified to Phosphotyrosine; by autocatalysis. Residue lysine 622 participates in ATP binding. The insert loop stretch occupies residues 647–888 (EHPGIVRYFN…SPKVYLYIQM (242 aa)). Serine 715 carries the post-translational modification Phosphoserine. Threonine 802 carries the post-translational modification Phosphothreonine. Residues 841–863 (KPTSSKSSSEATLSISPPRPTTL) form a disordered region. The span at 844 to 856 (SSKSSSEATLSIS) shows a compositional bias: low complexity. Aspartate 937 acts as the Proton acceptor in catalysis. At threonine 982 the chain carries Phosphothreonine. The interval 1090–1116 (QRSRSLSSSGTKHSRQSNNSHSPLPSN) is disordered. Serine 1094 carries the phosphoserine modification. Polar residues predominate over residues 1105 to 1116 (QSNNSHSPLPSN).

It belongs to the protein kinase superfamily. Ser/Thr protein kinase family. GCN2 subfamily. In terms of assembly, forms dimers with HSPA5/BIP in resting cells. Homotetramerizes in response to endoplasmic reticulum (ER) stress, leading to its activation. Interacts with HSP90B1/GRP94. Interacts with DNAJC3; inhibiting EIF2AK3/PERK activity. Interacts with ATAD3A; ATAD3A and EIF2S1/eIF-2-alpha occupy a common binding site within the cytoplasmic loop of EIF2AK3/PERK, leading to prevent EIF2AK3/PERK association with its substrate EIF2S1/eIF-2-alpha. Interacts with MFN2. Interacts with TMEM33. Interacts with PDIA6. Interacts with LACC1. Post-translationally, oligomerization of the N-terminal ER luminal domain by ER stress promotes EIF2AK3/PERK trans-autophosphorylation of the C-terminal cytoplasmic kinase domain at multiple residues including Thr-982 on the kinase activation loop. Autophosphorylated at Tyr-619 following endoplasmic reticulum stress, leading to activate its activity. Dephosphorylated at Tyr-619 by PTPN1/PTP1B, leading to inactivate its enzyme activity. Phosphorylation at Thr-802 by AKT (AKT1, AKT2 and/or AKT3) inactivates EIF2AK3/PERK. ADP-ribosylated by PARP16 upon ER stress, which increases kinase activity. In terms of tissue distribution, ubiquitous. A high level expression is seen in secretory tissues.

Its subcellular location is the endoplasmic reticulum membrane. The enzyme catalyses L-seryl-[protein] + ATP = O-phospho-L-seryl-[protein] + ADP + H(+). It carries out the reaction L-threonyl-[protein] + ATP = O-phospho-L-threonyl-[protein] + ADP + H(+). It catalyses the reaction L-tyrosyl-[protein] + ATP = O-phospho-L-tyrosyl-[protein] + ADP + H(+). Its activity is regulated as follows. Inhibited by HSPA5/BIP in absence of stress. Perturbation in protein folding in the endoplasmic reticulum (ER) promotes reversible dissociation from HSPA5/BIP and oligomerization, resulting in trans-autophosphorylation and kinase activity induction. Inactivated following phosphorylation at Thr-802 by AKT (AKT1, AKT2 and/or AKT3). Inhibited by ATAD3A at mitochondria-endoplasmic reticulum contact sites, providing a safe haven for mitochondrial protein translation during ER stress. Metabolic-stress sensing protein kinase that phosphorylates the alpha subunit of eukaryotic translation initiation factor 2 (EIF2S1/eIF-2-alpha) in response to various stress, such as unfolded protein response (UPR). Key effector of the integrated stress response (ISR) to unfolded proteins: EIF2AK3/PERK specifically recognizes and binds misfolded proteins, leading to its activation and EIF2S1/eIF-2-alpha phosphorylation. EIF2S1/eIF-2-alpha phosphorylation in response to stress converts EIF2S1/eIF-2-alpha in a global protein synthesis inhibitor, leading to a global attenuation of cap-dependent translation, while concomitantly initiating the preferential translation of ISR-specific mRNAs, such as the transcriptional activators ATF4 and QRICH1, and hence allowing ATF4- and QRICH1-mediated reprogramming. The EIF2AK3/PERK-mediated unfolded protein response increases mitochondrial oxidative phosphorylation by promoting ATF4-mediated expression of COX7A2L/SCAF1, thereby increasing formation of respiratory chain supercomplexes. In contrast to most subcellular compartments, mitochondria are protected from the EIF2AK3/PERK-mediated unfolded protein response due to EIF2AK3/PERK inhibition by ATAD3A at mitochondria-endoplasmic reticulum contact sites. In addition to EIF2S1/eIF-2-alpha, also phosphorylates NFE2L2/NRF2 in response to stress, promoting release of NFE2L2/NRF2 from the BCR(KEAP1) complex, leading to nuclear accumulation and activation of NFE2L2/NRF2. Serves as a critical effector of unfolded protein response (UPR)-induced G1 growth arrest due to the loss of cyclin-D1 (CCND1). Involved in control of mitochondrial morphology and function. This is Eukaryotic translation initiation factor 2-alpha kinase 3 from Homo sapiens (Human).